The following is a 122-amino-acid chain: UPF0231 protein VP2494 (122 aa).

Belongs to the UPF0231 family.

The polypeptide is UPF0231 protein VP2494 (Vibrio parahaemolyticus serotype O3:K6 (strain RIMD 2210633)).